Reading from the N-terminus, the 691-residue chain is Pentatricopeptide repeat-containing protein ATP4, chloroplastic (691 aa).

Low complexity predominate over residues 1–17 (MASLPLCRSPSSLLPSW). A chloroplast-targeting transit peptide spans 1-35 (MASLPLCRSPSSLLPSWPHRPISASFNPKNPSSPV). The disordered stretch occupies residues 1-76 (MASLPLCRSP…SSNTRFLWVN (76 aa)). A compositionally biased stretch (polar residues) spans 24 to 33 (ASFNPKNPSS). The span at 45–56 (PPQPQDPSPPSD) shows a compositional bias: pro residues. The span at 61–76 (GTRPSSSSNTRFLWVN) shows a compositional bias: polar residues. PPR repeat units lie at residues 163 to 197 (KVIL…GVQP), 198 to 232 (DNAT…GCSP), 233 to 267 (DMLT…KWQL), 268 to 302 (DPVI…GVRP), 303 to 337 (NLVV…QVQP), 338 to 372 (SRAT…AMGI), 373 to 403 (DVML…MKAS), 411 to 445 (DSWS…GFKP), 446 to 480 (NIFV…GIIP), and 546 to 580 (KMPY…GIYA). The Smr domain occupies 592 to 677 (LHLRGLSVGA…WFLTTNVAAK (86 aa)).

Belongs to the PPR family. P subfamily.

It is found in the plastid. The protein resides in the chloroplast stroma. Its function is as follows. Involved in translation and accumulation of chloroplast ATP synthase subunits. Interacts with the 5'-UTR of the chloroplast bicistronic atpB and atpE mRNA and activates its translation by facilitating ribosome association with the mRNA. Required for accumulation and activity of the chloroplast ATP synthase. Enhances atpA translation and is required for accumulation of specific processed atpF and psaJ transcripts. Required for the stabilization of bicistronic rpl16 and rpl14 mRNAs. The sequence is that of Pentatricopeptide repeat-containing protein ATP4, chloroplastic from Zea mays (Maize).